The primary structure comprises 601 residues: Potassium channel KAT2 (601 aa).

Topologically, residues 1-42 (METISNIFHNDPLPPLGARANQSIKLRKFIISPYDSRYRTWE) are cytoplasmic. The chain crosses the membrane as a helical span at residues 43-63 (TFLLVLVVYSAWICPFELAYL). The Extracellular portion of the chain corresponds to 64–71 (RNLSWKVS). A helical transmembrane segment spans residues 72–92 (LVDNIIDSFFAIDIILTFFLA). The Cytoplasmic segment spans residues 93–112 (YLDQKSYLLVDDPKRIVARY). Residues 113-133 (FSSWFLFDVCSTIPYQLLGQI) traverse the membrane as a helical segment. The Extracellular segment spans residues 134 to 144 (FKKHENGLAYR). A helical; Voltage-sensor transmembrane segment spans residues 145-165 (LLSMLRLWRLRRLSELFARLE). Topologically, residues 166–179 (KDIRLNYYWIRCTK) are cytoplasmic. Residues 180-200 (LISVTLFAVHCSGCFNYLIAD) traverse the membrane as a helical segment. The Extracellular segment spans residues 201–227 (RYPNPARTWIGAAIPNYRSQNLWVRYV). Residues 228-247 (TAIYWSITTLTTTGYGDLHA) constitute an intramembrane region (pore-forming). The Extracellular segment spans residues 248–251 (ENQR). A helical membrane pass occupies residues 252–272 (EMLFSICYMLFNLGLTAYLIG). Over 273-601 (NMTNLVVQGS…DGDHLFFMEI (329 aa)) the chain is Cytoplasmic. 356–475 (LFHGVSFTCM…RVILNNLSQK (120 aa)) contacts a nucleoside 3',5'-cyclic phosphate. The KHA domain occupies 530–601 (RVTIHMYSQR…DGDHLFFMEI (72 aa)).

This sequence belongs to the potassium channel family. Plant (TC 1.A.1.4) subfamily.

The protein resides in the membrane. Probable inward-rectifying potassium channel. Assuming opened or closed conformations in response to the voltage difference across the membrane, the channel is activated by hyperpolarization. This chain is Potassium channel KAT2, found in Oryza sativa subsp. japonica (Rice).